A 153-amino-acid polypeptide reads, in one-letter code: uncharacterized protein (153 aa).

It is found in the mitochondrion. This is an uncharacterized protein from Arabidopsis thaliana (Mouse-ear cress).